The sequence spans 352 residues: Small ribosomal subunit biogenesis GTPase RsgA (352 aa).

The segment covering 1-21 has biased composition (basic residues); sequence MKKNKLSKNQHRRIQAHHQYR. Residues 1–38 are disordered; it reads MKKNKLSKNQHRRIQAHHQYRLHPTSLTDDKNNQLDDA. In terms of domain architecture, CP-type G spans 116–278; that stretch reads FYDGIKPMAA…LIDSPGIREF (163 aa). GTP contacts are provided by residues 164–167 and 218–226; these read NKID and GQSGVGKSS. Residues cysteine 302, cysteine 307, histidine 309, and cysteine 315 each contribute to the Zn(2+) site.

It belongs to the TRAFAC class YlqF/YawG GTPase family. RsgA subfamily. As to quaternary structure, monomer. Associates with 30S ribosomal subunit, binds 16S rRNA. Requires Zn(2+) as cofactor.

It localises to the cytoplasm. Its function is as follows. One of several proteins that assist in the late maturation steps of the functional core of the 30S ribosomal subunit. Helps release RbfA from mature subunits. May play a role in the assembly of ribosomal proteins into the subunit. Circularly permuted GTPase that catalyzes slow GTP hydrolysis, GTPase activity is stimulated by the 30S ribosomal subunit. The chain is Small ribosomal subunit biogenesis GTPase RsgA from Hamiltonella defensa subsp. Acyrthosiphon pisum (strain 5AT).